The primary structure comprises 260 residues: MLNPFQLLFYSQLLASLTYFIGAAIYALPVPVYGVKKWAPRLITDSIYVVVWNSIYLGVLLFLGELLSLLGVTWDGYFSWLNNILYIEQSLYLMVKTILTASNAVPEVSALIQVVPFGALLTVITSALTFTSTLIAVSKIVYQYVAVFIATGVLFLSIPFRIGRSVGGAFIGSGIVFYVGLPYLPQFLAAFQMLPTQELNTPPQNASAIIDYYVHVVPSIITSLVIGPVIYIFILVGFSMGVASLVSGYGSRLPLIIDVF.

6 consecutive transmembrane segments (helical) span residues 13-33 (LLAS…VPVY), 47-67 (IYVV…GELL), 110-130 (ALIQ…ALTF), 140-160 (IVYQ…SIPF), 169-189 (AFIG…QFLA), and 220-240 (IITS…GFSM).

Forms a complex composed of CedA, CedA1 and CedA2.

The protein localises to the cell membrane. In terms of biological role, part of the Ced system, which is involved in DNA import. The chain is DNA import protein CedA from Sulfolobus acidocaldarius (strain ATCC 33909 / DSM 639 / JCM 8929 / NBRC 15157 / NCIMB 11770).